Reading from the N-terminus, the 92-residue chain is Putative transcription elongation factor S-II-like protein 81R (92 aa).

Residues 51–91 (GTVKCPGCGSRRVHALQRQTRSADEPMTLFAMCSECGKRWT) form a TFIIS-type zinc finger. Zn(2+)-binding residues include Cys55, Cys58, Cys83, and Cys86.

This is Putative transcription elongation factor S-II-like protein 81R from Dryophytes versicolor (chameleon treefrog).